The following is a 1024-amino-acid chain: MPKRTDLQTILILGSGPIQIGQAAEFDYSGTQALKALKNEGYRVILVNSNPATIMTDPELADATYLEPLTPEFVEKIIEKEKPDAILPTLGGQTALNLAMELHERGSLEKYGVELIGAGVEAIKKGEDRELFQAAMKKIGVETARGKMVHSMEEAVEYQKEIGLPIVIRPSFTLGGTGGGIAHTYEEFLAITEGGLRDSPVTSVLLEESILGWKEYELEVMRDTADTVIIITSIENFDPMGVHTGDSITVAPAQTLSDVEYQRLRDQSLAIIREIGVATGGSNIQFAVNPDNGRVIVIEMNPRVSRSSALASKATGFPIAKIAALLAVGYHLDELPNDITRVTPASFEPSIDYVVTKIPRFAFEKFPGTPDGLGTQMRSVGEVMAIGRTFKESLQKALRSTEGDIRGVYAEMDEAGLRALLYPNPRRIEAVIELLRRGESVESLFDATKIDRWFLSQLKEIMDAEKEILDLGPIAEWKYELWREVKRLGFSDARIGEIVGLSELEVRDLRKKAKATPVYKTVDTCAAEFEAHTPYHYSTYEWEDEVAPTDKPKVVILGSGPNRIGQGVEFDYATVHAVWALQEAGYETIMVNSNPETVSTDYDTADRLYFEPLTFEDVMNIVEHEKPVGVIVQLGGQTPLKLAKKLADAGAPIIGTSPETIHEAEDRASFNALCERLGLPQPRGKVAQTPAQARELAAELGFPLMARPSYVLGGRAMRTVRSMDELTTYLDEVYAAVEGQPSILLDQFLEGALELDVDTLCDGERAVVAGIMEHVEAAGVHSGDSACILPPVTLDAGVLERVKADTERLALELGVRGLMNVQWAVKDGTAYILEANPRASRTVPFVSKAVNHPLAKSAARIAAGQTLEQIGLLETPTPRMYSVKEVHLPFLKFKDVLPVLGPEMKSTGESMGIDSDPYLAFYRAQLGAKNYLPLEGTALLIGDGLDEVAGTLEGAGLKVIREQDGDELPDLLIDVTGSPLLRTALERGVPIVSTKEGAEWTARAVAEAKKAGMLGVRSLQEWVK.

The tract at residues 1-402 is carboxyphosphate synthetic domain; the sequence is MPKRTDLQTI…SLQKALRSTE (402 aa). ATP-binding residues include R129, R169, G175, G176, E208, I210, E215, G241, V242, H243, Q285, and E299. Positions 133-328 constitute an ATP-grasp 1 domain; that stretch reads QAAMKKIGVE…IAKIAALLAV (196 aa). Mg(2+) contacts are provided by Q285, E299, and N301. Mn(2+) is bound by residues Q285, E299, and N301. The oligomerization domain stretch occupies residues 403 to 546; that stretch reads GDIRGVYAEM…YSTYEWEDEV (144 aa). A carbamoyl phosphate synthetic domain region spans residues 547–929; sequence APTDKPKVVI…AFYRAQLGAK (383 aa). Residues 671–863 form the ATP-grasp 2 domain; sequence NALCERLGLP…LAKSAARIAA (193 aa). Residues R707, Q747, L749, E754, G779, V780, H781, S782, Q822, and E834 each contribute to the ATP site. Residues Q822, E834, and N836 each contribute to the Mg(2+) site. Q822, E834, and N836 together coordinate Mn(2+). The MGS-like domain occupies 930-1024; it reads NYLPLEGTAL…GVRSLQEWVK (95 aa). The interval 930-1024 is allosteric domain; the sequence is NYLPLEGTAL…GVRSLQEWVK (95 aa).

It belongs to the CarB family. Composed of two chains; the small (or glutamine) chain promotes the hydrolysis of glutamine to ammonia, which is used by the large (or ammonia) chain to synthesize carbamoyl phosphate. Tetramer of heterodimers (alpha,beta)4. Requires Mg(2+) as cofactor. Mn(2+) serves as cofactor.

It carries out the reaction hydrogencarbonate + L-glutamine + 2 ATP + H2O = carbamoyl phosphate + L-glutamate + 2 ADP + phosphate + 2 H(+). The enzyme catalyses hydrogencarbonate + NH4(+) + 2 ATP = carbamoyl phosphate + 2 ADP + phosphate + 2 H(+). Its pathway is amino-acid biosynthesis; L-arginine biosynthesis; carbamoyl phosphate from bicarbonate: step 1/1. It functions in the pathway pyrimidine metabolism; UMP biosynthesis via de novo pathway; (S)-dihydroorotate from bicarbonate: step 1/3. Its function is as follows. Large subunit of the glutamine-dependent carbamoyl phosphate synthetase (CPSase). CPSase catalyzes the formation of carbamoyl phosphate from the ammonia moiety of glutamine, carbonate, and phosphate donated by ATP, constituting the first step of 2 biosynthetic pathways, one leading to arginine and/or urea and the other to pyrimidine nucleotides. The large subunit (synthetase) binds the substrates ammonia (free or transferred from glutamine from the small subunit), hydrogencarbonate and ATP and carries out an ATP-coupled ligase reaction, activating hydrogencarbonate by forming carboxy phosphate which reacts with ammonia to form carbamoyl phosphate. The protein is Carbamoyl phosphate synthase large chain of Deinococcus radiodurans (strain ATCC 13939 / DSM 20539 / JCM 16871 / CCUG 27074 / LMG 4051 / NBRC 15346 / NCIMB 9279 / VKM B-1422 / R1).